Reading from the N-terminus, the 603-residue chain is Serine/threonine-protein kinase PLK1 (603 aa).

Low complexity predominate over residues 1–15 (MNAAAKAGKLARAPA). Residues 1-32 (MNAAAKAGKLARAPADLGKGGVPGDAAPGAPG) form a disordered region. Lys19 participates in a covalent cross-link: Glycyl lysine isopeptide (Lys-Gly) (interchain with G-Cter in ubiquitin). The 253-residue stretch at 53 to 305 (YVRGRFLGKG…IHELLNDEFF (253 aa)) folds into the Protein kinase domain. Residues 59 to 67 (LGKGGFAKC) and Lys82 each bind ATP. Ser103 carries the post-translational modification Phosphoserine. An ATP-binding site is contributed by Glu131. Ser137 carries the post-translational modification Phosphoserine. Asp176 serves as the catalytic Proton acceptor. Residues 178–181 (KLGN) and Asp194 contribute to the ATP site. The interval 194–221 (DFGLATKVEYEGERKKTLCGTPNYIAPE) is activation loop. Phosphothreonine; by AURKA is present on Thr210. At Thr214 the chain carries Phosphothreonine. A phosphoserine; by autocatalysis mark is found at Ser269 and Ser335. Positions 337 to 340 (RKPL) match the D-box that targets the protein for proteasomal degradation in anaphase motif. A Glycyl lysine isopeptide (Lys-Gly) (interchain with G-Cter in SUMO2) cross-link involves residue Lys338. A disordered region spans residues 338 to 361 (KPLTVLNKGVENPLPDRPREKEEP). The span at 351 to 361 (LPDRPREKEEP) shows a compositional bias: basic and acidic residues. 2 positions are modified to phosphoserine: Ser375 and Ser450. Positions 410 to 488 (WVSKWVDYSD…LNYFRNYMSE (79 aa)) constitute a POLO box 1 domain. Lys492 is covalently cross-linked (Glycyl lysine isopeptide (Lys-Gly) (interchain with G-Cter in ubiquitin)). The interval 493–507 (AGANITPREGDELAR) is linker. Residue Thr498 is modified to Phosphothreonine. One can recognise a POLO box 2 domain in the interval 510–592 (YLRTWFRTRS…ARTMVDKLLS (83 aa)). Residues 538-540 (HTK) are important for interaction with phosphorylated proteins.

The protein belongs to the protein kinase superfamily. Ser/Thr protein kinase family. CDC5/Polo subfamily. In terms of assembly, interacts with CEP170 and EVI5. Interacts and phosphorylates ERCC6L. Interacts with FAM29A. Interacts with SLX4/BTBD12 and TTDN1. Interacts with BUB1B. Interacts (via POLO-box domain) with the phosphorylated form of BUB1, CENPU and CDC25C. Interacts with isoform 3 of SGO1. Interacts with BORA, KIF2A and AURKA. Interacts with TOPORS and CYLD. Interacts with ECT2; the interaction is stimulated upon phosphorylation of ECT2 on 'Thr-444'. Interacts with PRC1. Interacts with KIF20A/MKLP2 (when phosphorylated), leading to the recruitment at the central spindle. Interacts (via POLO box domains) with PPP1R12A/MYPT1 (when previously phosphorylated by CDK1). Part of an astrin (SPAG5)-kinastrin (SKAP) complex containing KNSTRN, SPAG5, PLK1, DYNLL1 and SGO2. Interacts with BIRC6/bruce. Interacts with CDK1-phosphorylated FRY; this interaction occurs in mitotic cells, but not in interphase cells. FRY interaction facilitates AURKA-mediated PLK1 phosphorylation. Interacts with CDK1-phosphorylated DCTN6 during mitotic prometaphase; the interaction facilitates recruitment to kinetochores. Interacts with CEP68; the interaction phosphorylates CEP68. Interacts (via POLO-box domain) with DCTN1. Interacts with CEP20 in later G1, S, G2 and M phases of the cell cycle; this interaction recruits PLK1 to centrosomes, a step required for S phase progression. Interacts with HSF1; this interaction increases upon heat shock but does not modulate neither HSF1 homotrimerization nor DNA-binding activities. Interacts with HNRNPU; this interaction induces phosphorylation of HNRNPU in mitosis. Interacts (via its N-terminus) with RIOK2. Interacts with KLHL22. Interacts (via POLO box domains) with NEDD9/HEF1 (via C-terminus). Interacts (via RVxF motif) with FIRRM; regulates PLK1 kinase activity. Interacts with SKA3; the interaction promotes the stability of PLK1. Interacts with the MTMR3:MTMR4 heterooligomer; brings CEP55 and PLK1 together during early mitosis, regulating the phosphorylation of CEP55 by PLK1 and its recruitment to the midbody where it can mediate cell abscission. In terms of processing, catalytic activity is enhanced by phosphorylation of Thr-210. Phosphorylation at Thr-210 is first detected on centrosomes in the G2 phase of the cell cycle, peaks in prometaphase and gradually disappears from centrosomes during anaphase. Dephosphorylation at Thr-210 at centrosomes is probably mediated by protein phosphatase 1C (PP1C), via interaction with PPP1R12A/MYPT1. Autophosphorylation and phosphorylation of Ser-137 may not be significant for the activation of PLK1 during mitosis, but may enhance catalytic activity during recovery after DNA damage checkpoint. Phosphorylated in vitro by STK10. Post-translationally, ubiquitinated by the anaphase promoting complex/cyclosome (APC/C) in anaphase and following DNA damage, leading to its degradation by the proteasome. Ubiquitination is mediated via its interaction with FZR1/CDH1. Ubiquitination and subsequent degradation prevents entry into mitosis and is essential to maintain an efficient G2 DNA damage checkpoint. Monoubiquitination at Lys-492 by the BCR(KLHL22) ubiquitin ligase complex does not lead to degradation: it promotes PLK1 dissociation from phosphoreceptor proteins and subsequent removal from kinetochores, allowing silencing of the spindle assembly checkpoint (SAC) and chromosome segregation.

The protein resides in the nucleus. Its subcellular location is the chromosome. It is found in the centromere. It localises to the kinetochore. The protein localises to the cytoplasm. The protein resides in the cytoskeleton. Its subcellular location is the microtubule organizing center. It is found in the centrosome. It localises to the spindle. The protein localises to the midbody. The catalysed reaction is L-seryl-[protein] + ATP = O-phospho-L-seryl-[protein] + ADP + H(+). It carries out the reaction L-threonyl-[protein] + ATP = O-phospho-L-threonyl-[protein] + ADP + H(+). With respect to regulation, activated by phosphorylation of Thr-210 by AURKA; phosphorylation by AURKA is enhanced by BORA. Once activated, activity is stimulated by binding target proteins. Binding of target proteins has no effect on the non-activated kinase. Several inhibitors targeting PLKs are currently in development and are under investigation in a growing number of clinical trials, such as BI 2536, an ATP-competitive PLK1 inhibitor or BI 6727, a dihydropteridinone that specifically inhibits the catalytic activity of PLK1. In terms of biological role, serine/threonine-protein kinase that performs several important functions throughout M phase of the cell cycle, including the regulation of centrosome maturation and spindle assembly, the removal of cohesins from chromosome arms, the inactivation of anaphase-promoting complex/cyclosome (APC/C) inhibitors, and the regulation of mitotic exit and cytokinesis. Polo-like kinase proteins act by binding and phosphorylating proteins that are already phosphorylated on a specific motif recognized by the POLO box domains. Phosphorylates BORA, BUB1B/BUBR1, CCNB1, CDC25C, CEP55, ECT2, ERCC6L, FBXO5/EMI1, FOXM1, KIF20A/MKLP2, CENPU, NEDD1, NINL, NPM1, NUDC, PKMYT1/MYT1, KIZ, PPP1R12A/MYPT1, PRC1, RACGAP1/CYK4, RHNO1, SGO1, STAG2/SA2, TEX14, TOPORS, p73/TP73, TPT1, WEE1 and HNRNPU. Plays a key role in centrosome functions and the assembly of bipolar spindles by phosphorylating KIZ, NEDD1 and NINL. NEDD1 phosphorylation promotes subsequent targeting of the gamma-tubulin ring complex (gTuRC) to the centrosome, an important step for spindle formation. Phosphorylation of NINL component of the centrosome leads to NINL dissociation from other centrosomal proteins. Involved in mitosis exit and cytokinesis by phosphorylating CEP55, ECT2, KIF20A/MKLP2, CENPU, PRC1 and RACGAP1. Recruited at the central spindle by phosphorylating and docking PRC1 and KIF20A/MKLP2; creates its own docking sites on PRC1 and KIF20A/MKLP2 by mediating phosphorylation of sites subsequently recognized by the POLO box domains. Phosphorylates RACGAP1, thereby creating a docking site for the Rho GTP exchange factor ECT2 that is essential for the cleavage furrow formation. Promotes the central spindle recruitment of ECT2. Plays a central role in G2/M transition of mitotic cell cycle by phosphorylating CCNB1, CDC25C, FOXM1, CENPU, PKMYT1/MYT1, PPP1R12A/MYPT1 and WEE1. Part of a regulatory circuit that promotes the activation of CDK1 by phosphorylating the positive regulator CDC25C and inhibiting the negative regulators WEE1 and PKMYT1/MYT1. Also acts by mediating phosphorylation of cyclin-B1 (CCNB1) on centrosomes in prophase. Phosphorylates FOXM1, a key mitotic transcription regulator, leading to enhance FOXM1 transcriptional activity. Involved in kinetochore functions and sister chromatid cohesion by phosphorylating BUB1B/BUBR1, FBXO5/EMI1 and STAG2/SA2. PLK1 is high on non-attached kinetochores suggesting a role of PLK1 in kinetochore attachment or in spindle assembly checkpoint (SAC) regulation. Required for kinetochore localization of BUB1B. Regulates the dissociation of cohesin from chromosomes by phosphorylating cohesin subunits such as STAG2/SA2. Phosphorylates SGO1: required for spindle pole localization of isoform 3 of SGO1 and plays a role in regulating its centriole cohesion function. Mediates phosphorylation of FBXO5/EMI1, a negative regulator of the APC/C complex during prophase, leading to FBXO5/EMI1 ubiquitination and degradation by the proteasome. Acts as a negative regulator of p53 family members: phosphorylates TOPORS, leading to inhibit the sumoylation of p53/TP53 and simultaneously enhance the ubiquitination and subsequent degradation of p53/TP53. Phosphorylates the transactivation domain of the transcription factor p73/TP73, leading to inhibit p73/TP73-mediated transcriptional activation and pro-apoptotic functions. Phosphorylates BORA, and thereby promotes the degradation of BORA. Contributes to the regulation of AURKA function. Also required for recovery after DNA damage checkpoint and entry into mitosis. Phosphorylates MISP, leading to stabilization of cortical and astral microtubule attachments required for proper spindle positioning. Together with MEIKIN, acts as a regulator of kinetochore function during meiosis I: required both for mono-orientation of kinetochores on sister chromosomes and protection of centromeric cohesin from separase-mediated cleavage. Phosphorylates CEP68 and is required for its degradation. Regulates nuclear envelope breakdown during prophase by phosphorylating DCTN1 resulting in its localization in the nuclear envelope. Phosphorylates the heat shock transcription factor HSF1, promoting HSF1 nuclear translocation upon heat shock. Phosphorylates HSF1 also in the early mitotic period; this phosphorylation regulates HSF1 localization to the spindle pole, the recruitment of the SCF(BTRC) ubiquitin ligase complex induicing HSF1 degradation, and hence mitotic progression. Regulates mitotic progression by phosphorylating RIOK2. Through the phosphorylation of DZIP1 regulates the localization during mitosis of the BBSome, a ciliary protein complex involved in cilium biogenesis. Regulates DNA repair during mitosis by mediating phosphorylation of POLQ and RHNO1, thereby promoting POLQ recruitment to DNA damage sites. Phosphorylates ATXN10 which may play a role in the regulation of cytokinesis and may stimulate the proteasome-mediated degradation of ATXN10. The protein is Serine/threonine-protein kinase PLK1 (Plk1) of Rattus norvegicus (Rat).